A 1545-amino-acid polypeptide reads, in one-letter code: ATP-binding cassette sub-family C member 9 (1545 aa).

The Extracellular portion of the chain corresponds to 1–30; sequence MSLSFCGNNISSYNIYHGVLQNPCFVDALN. N9 carries an N-linked (GlcNAc...) asparagine glycan. The chain crosses the membrane as a helical span at residues 31–51; the sequence is LVPHVFLLFITFPILFIGWGS. The Cytoplasmic segment spans residues 52-72; sequence QSSKVQIHHNTWLHFPGHNLR. Residues 73–93 traverse the membrane as a helical segment; it reads WILTFALLFVHVCEIAEGIVS. The Extracellular portion of the chain corresponds to 94–101; the sequence is DSQRASRH. The chain crosses the membrane as a helical span at residues 102–122; that stretch reads LHLFMPAVMGFVATTTSIVYY. Over 123–132 the chain is Cytoplasmic; the sequence is HNIETSNFPK. The helical transmembrane segment at 133–153 threads the bilayer; it reads LLLALFLYWVMAFITKTIKLV. The Extracellular portion of the chain corresponds to 154-167; sequence KYWQLGWGMSDLRF. A helical membrane pass occupies residues 168-188; the sequence is CITGVMVILNGLLMAVEINVI. Residues 189-301 are Cytoplasmic-facing; it reads RVRRYVFFMN…AFGRPILLSS (113 aa). The ABC transmembrane type-1 1 domain occupies 297–594; it reads ILLSSTFRYL…LSTVVRFAVK (298 aa). Residues 302 to 322 form a helical membrane-spanning segment; sequence TFRYLADLLGFAGPLCISGIV. Residues 323–347 are Extracellular-facing; it reads QRVNEPKNNTTRFSETLSSKEFLEN. N330 and N331 each carry an N-linked (GlcNAc...) asparagine glycan. A helical transmembrane segment spans residues 348 to 368; sequence AHVLAVLLFLALILQRTFLQA. Residues 369–420 lie on the Cytoplasmic side of the membrane; it reads SYYVTIETGINLRGALLAMIYNKILRLSTSNLSMGEMTLGQINNLVAIETNQ. A helical membrane pass occupies residues 421–441; it reads LMWFLFLCPNLWAMPVQIIMG. Over 442–452 the chain is Extracellular; sequence VILLYNLLGSS. The chain crosses the membrane as a helical span at residues 453–473; the sequence is ALVGAAVIVLLAPIQYFIATK. The Cytoplasmic segment spans residues 474-528; it reads LAEAQKSTLDYSTERLKKTNEILKGIKLLKLYAWEHIFCKSVEETRMKELSSLKT. A helical membrane pass occupies residues 529 to 549; it reads FALYTSLSIFMNAAIPIAAVL. The Extracellular segment spans residues 550–568; that stretch reads ATFVTHAYASGNNLKPAEA. A helical membrane pass occupies residues 569–589; the sequence is FASLSLFHILVTPLFLLSTVV. The Cytoplasmic portion of the chain corresponds to 590-986; that stretch reads RFAVKAIISV…TCWWYLTSGG (397 aa). Residues 668-908 enclose the ABC transporter 1 domain; sequence IKVTNGYFSW…DVELYEHWKT (241 aa). Position 701 to 708 (701 to 708) interacts with ATP; that stretch reads GQVGCGKS. The interval 940-963 is disordered; it reads REAKAQMEDEDEEEEEEEDEDDNM. The span at 947-962 shows a compositional bias: acidic residues; sequence EDEDEEEEEEEDEDDN. A helical transmembrane segment spans residues 987–1007; the sequence is FFLLFLMIFSKLLKHSVIVAI. In terms of domain architecture, ABC transmembrane type-1 2 spans 990 to 1270; the sequence is LFLMIFSKLL…VVRNLADLEV (281 aa). The Extracellular segment spans residues 1008-1030; that stretch reads DYWLATWTSEYSINDPGKADQTF. Residues 1031–1051 traverse the membrane as a helical segment; the sequence is YVAGFSILCGAGIFLCLVTSL. The Cytoplasmic portion of the chain corresponds to 1052–1123; the sequence is TVEWMGLTAA…TLLCLSAIGM (72 aa). The helical transmembrane segment at 1124–1144 threads the bilayer; the sequence is ISYATPVFLIALAPLGVAFYF. Topologically, residues 1145 to 1241 are extracellular; the sequence is IQKYFRVASK…IASISGSSNS (97 aa). Residues 1242-1262 traverse the membrane as a helical segment; it reads GLVGLGLLYALTITNYLNWVV. The Cytoplasmic portion of the chain corresponds to 1263-1545; the sequence is RNLADLEVQM…LFSTLVMTNK (283 aa). The 235-residue stretch at 1308–1542 folds into the ABC transporter 2 domain; the sequence is IKIHDLCVRY…KNGLFSTLVM (235 aa). Residue 1342-1349 coordinates ATP; sequence GRTGSGKS.

It belongs to the ABC transporter superfamily. ABCC family. Conjugate transporter (TC 3.A.1.208) subfamily. As to quaternary structure, interacts with KCNJ11. Interacts with KCNJ8. In terms of tissue distribution, expressed at high levels in heart, skeletal muscle and ovary. Moderate levels are found in brain, tongue and pancreatic islets. Low levels are found in lung, testis and adrenal gland. Expressed at very low levels in stomach, colon, thyroid and pituitary.

It is found in the membrane. In terms of biological role, subunit of ATP-sensitive potassium channels (KATP). Can form cardiac and smooth muscle-type KATP channels with KCNJ11. KCNJ11 forms the channel pore while ABCC9 is required for activation and regulation. Can form a sulfonylurea-sensitive but ATP-insensitive potassium channel with KCNJ8. The protein is ATP-binding cassette sub-family C member 9 (Abcc9) of Rattus norvegicus (Rat).